The following is a 461-amino-acid chain: Xyloglucan 6-xylosyltransferase 2 (461 aa).

Residues 1 to 20 (MIERCLGAYRCRRIQRALRQ) lie on the Cytoplasmic side of the membrane. The chain crosses the membrane as a helical; Signal-anchor for type II membrane protein span at residues 21–40 (LKVTILCLLLTVVVLRSTIG). At 41 to 461 (AGKFGTPEQD…KAVKVQTNQV (421 aa)) the chain is on the lumenal side. Residues 74–95 (QTGGDSSSGDGGGNSGGSNNYE) are disordered. N-linked (GlcNAc...) asparagine glycosylation occurs at N432.

This sequence belongs to the glycosyltransferase 34 family. In terms of assembly, homodimer. Interacts with XXT1 and XXT5. Interacts with FUT1 and XLT2.

It localises to the golgi apparatus membrane. The enzyme catalyses Transfers an alpha-D-xylosyl residue from UDP-D-xylose to a glucose residue in xyloglucan, forming an alpha-(1-&gt;6)-D-xylosyl-D-glucose linkage.. Functionally, xylosyltransferase specific to UDP-D-xylose that accepts both cellopentaose and cellohexaose as substrates, with a better use of cellohexaose, to produce xyloglucan. Adds preferentially the first xylosyl residue to the fourth glucosyl residue from the reducing end of both acceptors. Transfer one xylose mainly to the second glucose residue from the non-reducing end. The acceptor should have a minimum of four glucose residues. Associates with other xyloglucan-synthesizing enzymes to form multiprotein complexes for xyloglucan synthesis in the Golgi. The polypeptide is Xyloglucan 6-xylosyltransferase 2 (XXT2) (Arabidopsis thaliana (Mouse-ear cress)).